The chain runs to 475 residues: Gelsolin-like protein 1 (475 aa).

Residues 1–131 (MGGTSLDPAL…GYRHVDDQFK (131 aa)) are actin binding, actin severing, Ca-sensitive. A necessary for barbed end capping activity region spans residues 1–239 (MGGTSLDPAL…VRKVSKGKDD (239 aa)). One copy of the Gelsolin-like 1 repeat lies at 27 to 105 (FVLEPVPEVD…IQNYESPLFL (79 aa)). The tract at residues 70 to 73 (DEIG) is actin-actin interfilament contact point. Residues 106 to 147 (SYFPDGIRYVSGGYESGYRHVDDQFKNWKPHLFHCKGKRNVR) are required for synapse elimination during development. A required for phosphatidylinositol 4,5-bisphosphate binding and regulation region spans residues 133 to 227 (WKPHLFHCKG…STFWSYFGGV (95 aa)). Gelsolin-like repeat units lie at residues 148–208 (CTEV…KVHI), 275–341 (RKEQ…STQF), and 375–447 (EIAN…PPTF). The F- and G-actin binding, Ca-independent stretch occupies residues 240–475 (DDNYWKRLTE…VQNMRRLLFH (236 aa)). The tract at residues 248–348 (TEQITLWKVS…TQFTQWFRDW (101 aa)) is inhibitory for phosphatidylinositol 4,5-bisphosphate binding activity.

It belongs to the villin/gelsolin family. As to quaternary structure, monomer. Binds to actin monomers and filaments. Post-translationally, cleavage by caspase ced-3 activates its actin-severing function and is required for the elimination of presynaptic components during development.

Its subcellular location is the cytoplasm. It is found in the cytoskeleton. Calcium-regulated, actin-modulating protein that binds to the plus (or barbed) ends of actin monomers or filaments, preventing monomer exchange (end-blocking or capping). Binds actin but does not nucleate actin polymerization, albeit slows down elongation by blocking the barbed ends. By promoting actin depolymerization, required for the elimination of presynaptic components downstream of the egl-1, ced-4 and ced-3 apoptotic pathway during larval development. This chain is Gelsolin-like protein 1, found in Caenorhabditis elegans.